Reading from the N-terminus, the 173-residue chain is Peptide methionine sulfoxide reductase MsrA (173 aa).

Residue cysteine 10 is part of the active site.

Belongs to the MsrA Met sulfoxide reductase family.

It carries out the reaction L-methionyl-[protein] + [thioredoxin]-disulfide + H2O = L-methionyl-(S)-S-oxide-[protein] + [thioredoxin]-dithiol. The enzyme catalyses [thioredoxin]-disulfide + L-methionine + H2O = L-methionine (S)-S-oxide + [thioredoxin]-dithiol. In terms of biological role, has an important function as a repair enzyme for proteins that have been inactivated by oxidation. Catalyzes the reversible oxidation-reduction of methionine sulfoxide in proteins to methionine. This Nautilia profundicola (strain ATCC BAA-1463 / DSM 18972 / AmH) protein is Peptide methionine sulfoxide reductase MsrA.